A 405-amino-acid chain; its full sequence is Aspartokinase (405 aa).

ATP is bound at residue 7–10 (KYGG). Position 25-30 (25-30 (RIAHYR)) interacts with substrate. Serine 41 is a binding site for ATP. Substrate is bound by residues 47-49 (TDE), glutamate 74, 125-126 (LE), 150-153 (RGGS), and serine 153. ATP is bound by residues 173-174 (TD), 179-184 (YTTDPH), and arginine 209. 2 consecutive ACT domains span residues 263 to 342 (IGLI…IAKV) and 344 to 405 (IVGV…LDKA). Residues aspartate 270, 288 to 290 (AVD), glutamine 294, 355 to 356 (VP), 369 to 370 (NI), and 376 to 377 (SE) each bind substrate.

Belongs to the aspartokinase family. Tetramer consisting of 2 isoforms Alpha (catalytic and regulation) and of a homodimer of 2 isoforms Beta (regulation).

The enzyme catalyses L-aspartate + ATP = 4-phospho-L-aspartate + ADP. It participates in amino-acid biosynthesis; L-lysine biosynthesis via DAP pathway; (S)-tetrahydrodipicolinate from L-aspartate: step 1/4. The protein operates within amino-acid biosynthesis; L-methionine biosynthesis via de novo pathway; L-homoserine from L-aspartate: step 1/3. It functions in the pathway amino-acid biosynthesis; L-threonine biosynthesis; L-threonine from L-aspartate: step 1/5. In terms of biological role, catalyzes the phosphorylation of the beta-carboxyl group of aspartic acid with ATP to yield 4-phospho-L-aspartate, which is involved in the branched biosynthetic pathway leading to the biosynthesis of amino acids lysine, threonine, isoleucine and methionine. This is Aspartokinase (ask) from Thermus thermophilus (strain ATCC BAA-163 / DSM 7039 / HB27).